A 491-amino-acid chain; its full sequence is Protein nucleotidyltransferase YdiU (491 aa).

ATP contacts are provided by glycine 94, glycine 96, arginine 97, lysine 117, aspartate 129, glycine 130, arginine 180, and arginine 187. The active-site Proton acceptor is aspartate 256. Asparagine 257 and aspartate 266 together coordinate Mg(2+). Aspartate 266 is a binding site for ATP.

The protein belongs to the SELO family. Requires Mg(2+) as cofactor. Mn(2+) serves as cofactor.

It catalyses the reaction L-seryl-[protein] + ATP = 3-O-(5'-adenylyl)-L-seryl-[protein] + diphosphate. The enzyme catalyses L-threonyl-[protein] + ATP = 3-O-(5'-adenylyl)-L-threonyl-[protein] + diphosphate. It carries out the reaction L-tyrosyl-[protein] + ATP = O-(5'-adenylyl)-L-tyrosyl-[protein] + diphosphate. The catalysed reaction is L-histidyl-[protein] + UTP = N(tele)-(5'-uridylyl)-L-histidyl-[protein] + diphosphate. It catalyses the reaction L-seryl-[protein] + UTP = O-(5'-uridylyl)-L-seryl-[protein] + diphosphate. The enzyme catalyses L-tyrosyl-[protein] + UTP = O-(5'-uridylyl)-L-tyrosyl-[protein] + diphosphate. Functionally, nucleotidyltransferase involved in the post-translational modification of proteins. It can catalyze the addition of adenosine monophosphate (AMP) or uridine monophosphate (UMP) to a protein, resulting in modifications known as AMPylation and UMPylation. The chain is Protein nucleotidyltransferase YdiU from Alkaliphilus metalliredigens (strain QYMF).